The following is a 1220-amino-acid chain: Plasma membrane calcium-transporting ATPase 1 (1220 aa).

An N-acetylglycine modification is found at Gly2. At 2-105 (GDMANNSVAY…KTFLQLVWEA (104 aa)) the chain is on the cytoplasmic side. Phosphoserine is present on residues Ser8 and Ser17. The helical transmembrane segment at 106 to 126 (LQDVTLIILEIAAIVSLGLSF) threads the bilayer. Residues 127–154 (YQPPEGDNALCGEVSVGEEEGEGETGWI) lie on the Extracellular side of the membrane. The chain crosses the membrane as a helical span at residues 155–175 (EGAAILLSVVCVVLVTAFNDW). The Cytoplasmic portion of the chain corresponds to 176–366 (SKEKQFRGLQ…KEKSVLQGKL (191 aa)). The tract at residues 297–356 (EEEKKDEKKKEKKNKKQDGAIENRNKAKAQDGAAMEMQPLKSEEGGDGDEKDKKKANLPK) is disordered. 2 stretches are compositionally biased toward basic and acidic residues: residues 312–325 (KQDGAIENRNKAKA) and 337–356 (KSEEGGDGDEKDKKKANLPK). Position 338 is a phosphoserine (Ser338). The chain crosses the membrane as a helical span at residues 367-386 (TKLAVQIGKAGLLMSAITVI). The Extracellular portion of the chain corresponds to 387-418 (ILVLYFVIDTFWVQKRPWLAECTPIYIQYFVK). The helical transmembrane segment at 419–439 (FFIIGVTVLVVAVPEGLPLAV) threads the bilayer. The Cytoplasmic portion of the chain corresponds to 440–855 (TISLAYSVKK…RNVYDSISKF (416 aa)). The active-site 4-aspartylphosphate intermediate is the Asp475. Mg(2+) is bound by residues Asp475, Thr477, and Asp797. A helical membrane pass occupies residues 856-876 (LQFQLTVNVVAVIVAFTGACI). Residues 877–882 (TQDSPL) are Extracellular-facing. Residues 883–903 (KAVQMLWVNLIMDTLASLALA) form a helical membrane-spanning segment. The Cytoplasmic portion of the chain corresponds to 904–927 (TEPPTESLLLRKPYGRNKPLISRT). Residues 928-948 (MMKNILGHAFYQLVVVFTLLF) traverse the membrane as a helical segment. Topologically, residues 949–971 (AGEKFFDIDSGRNAPLHAPPSEH) are extracellular. The helical transmembrane segment at 972 to 991 (YTIVFNTFVLMQLFNEINAR) threads the bilayer. Residues 992 to 1005 (KIHGERNVFEGIFN) lie on the Cytoplasmic side of the membrane. A helical membrane pass occupies residues 1006 to 1027 (NAIFCTIVLGTFVVQIIIVQFG). Residues 1028–1039 (GKPFSCSELSIE) lie on the Extracellular side of the membrane. The chain crosses the membrane as a helical span at residues 1040-1060 (QWLWSIFLGMGTLLWGQLIST). The Cytoplasmic segment spans residues 1061–1220 (IPTSRLKFLK…SPLHSLETSL (160 aa)). The segment at 1100 to 1117 (LRRGQILWFRGLNRIQTQ) is calmodulin-binding subdomain A. Thr1116 is modified (phosphothreonine; by PKC). Positions 1118-1220 (IRVVNAFRSS…SPLHSLETSL (103 aa)) are required for basolateral membrane targeting. Phosphoserine is present on residues Ser1140 and Ser1155. Residues 1162–1220 (IDDTDAEDDAPTKRNSSPPPSPNKNNNAVDSGIHLTIEMNKSATSSSPGSPLHSLETSL) form a disordered region. Phosphothreonine is present on Thr1165. The residue at position 1177 (Ser1177) is a Phosphoserine; by PKA. 2 positions are modified to phosphoserine: Ser1178 and Ser1182. Over residues 1200–1220 (MNKSATSSSPGSPLHSLETSL) the composition is skewed to polar residues.

This sequence belongs to the cation transport ATPase (P-type) (TC 3.A.3) family. Type IIB subfamily. As to quaternary structure, monomer. Dimer. Oligomer. Calmodulin binding. Interacts with PDZD11. Interacts with SLC35G1 and STIM1. Interacts with YWHAE; interacts with the monomeric and dimeric forms of the YWHAE but prefer the monomer form; this interaction inhibits calcium-transporting ATPase activity. Interacts with NPTN; this interaction stabilizes ATP2B1 and increases ATPase activity; this interaction controls T cell calcium homeostasis following T cell activation. Interacts with EPB41; regulates small intestinal calcium absorption through regulation of membrane expression of ATP2B1. As to expression, isoform B is ubiquitously expressed. Isoforms A and E have only been found in brain cortex. Isoform C is found in brain cortex, skeletal muscle and heart muscle. Isoform D has only been found in fetal skeletal muscle. Isoform K has been found in small intestine and liver. Isoform B is expressed in hair cells of inner ear.

The protein localises to the cell membrane. It is found in the basolateral cell membrane. It localises to the synapse. Its subcellular location is the presynaptic cell membrane. The protein resides in the cytoplasmic vesicle. The protein localises to the secretory vesicle. It is found in the synaptic vesicle membrane. The enzyme catalyses Ca(2+)(in) + ATP + H2O = Ca(2+)(out) + ADP + phosphate + H(+). In terms of biological role, catalyzes the hydrolysis of ATP coupled with the transport of calcium from the cytoplasm to the extracellular space thereby maintaining intracellular calcium homeostasis. Plays a role in blood pressure regulation through regulation of intracellular calcium concentration and nitric oxide production leading to regulation of vascular smooth muscle cells vasoconstriction. Positively regulates bone mineralization through absorption of calcium from the intestine. Plays dual roles in osteoclast differentiation and survival by regulating RANKL-induced calcium oscillations in preosteoclasts and mediating calcium extrusion in mature osteoclasts. Regulates insulin sensitivity through calcium/calmodulin signaling pathway by regulating AKT1 activation and NOS3 activation in endothelial cells. May play a role in synaptic transmission by modulating calcium and proton dynamics at the synaptic vesicles. This chain is Plasma membrane calcium-transporting ATPase 1, found in Rattus norvegicus (Rat).